Here is a 304-residue protein sequence, read N- to C-terminus: Aspartate carbamoyltransferase catalytic subunit (304 aa).

Residues R56 and T57 each contribute to the carbamoyl phosphate site. K85 contributes to the L-aspartate binding site. Positions 106, 134, and 137 each coordinate carbamoyl phosphate. L-aspartate contacts are provided by R167 and R226. Residues L265 and P266 each coordinate carbamoyl phosphate.

It belongs to the aspartate/ornithine carbamoyltransferase superfamily. ATCase family. Heterooligomer of catalytic and regulatory chains.

The enzyme catalyses carbamoyl phosphate + L-aspartate = N-carbamoyl-L-aspartate + phosphate + H(+). The protein operates within pyrimidine metabolism; UMP biosynthesis via de novo pathway; (S)-dihydroorotate from bicarbonate: step 2/3. Functionally, catalyzes the condensation of carbamoyl phosphate and aspartate to form carbamoyl aspartate and inorganic phosphate, the committed step in the de novo pyrimidine nucleotide biosynthesis pathway. In Picrophilus torridus (strain ATCC 700027 / DSM 9790 / JCM 10055 / NBRC 100828 / KAW 2/3), this protein is Aspartate carbamoyltransferase catalytic subunit.